We begin with the raw amino-acid sequence, 377 residues long: Succinyl-diaminopimelate desuccinylase (377 aa).

His67 provides a ligand contact to Zn(2+). Asp69 is an active-site residue. Asp100 provides a ligand contact to Zn(2+). The Proton acceptor role is filled by Glu134. Residues Glu135, Glu163, and His349 each coordinate Zn(2+).

This sequence belongs to the peptidase M20A family. DapE subfamily. In terms of assembly, homodimer. Zn(2+) serves as cofactor. Requires Co(2+) as cofactor.

It carries out the reaction N-succinyl-(2S,6S)-2,6-diaminopimelate + H2O = (2S,6S)-2,6-diaminopimelate + succinate. Its pathway is amino-acid biosynthesis; L-lysine biosynthesis via DAP pathway; LL-2,6-diaminopimelate from (S)-tetrahydrodipicolinate (succinylase route): step 3/3. Functionally, catalyzes the hydrolysis of N-succinyl-L,L-diaminopimelic acid (SDAP), forming succinate and LL-2,6-diaminopimelate (DAP), an intermediate involved in the bacterial biosynthesis of lysine and meso-diaminopimelic acid, an essential component of bacterial cell walls. The protein is Succinyl-diaminopimelate desuccinylase of Shewanella frigidimarina (strain NCIMB 400).